We begin with the raw amino-acid sequence, 1728 residues long: Nebulin-related-anchoring protein (1728 aa).

Residues 4–64 (QACSRCGYGV…HAHNPKNNTF (61 aa)) form the LIM zinc-binding domain. Nebulin repeat units follow at residues 173–200 (TPAY…ERVS), 201–235 (TFTP…QQRG), 244–271 (TPAY…REMK), 313–340 (TPAY…KMKG), 345–379 (HSLA…NSKG), 386–414 (ETPQ…TQLR), 416–450 (HYDG…HDVV), 484–518 (KFSS…RNKL), 519–553 (NYTL…KTKG), 555–589 (GFEM…KMKG), 599–623 (LLHS…ESKT), 624–658 (HFNL…DYTV), 659–689 (LPED…WMRG), 699–721 (NLEQ…RVDE), 723–757 (KFTS…QSVH), 758–792 (QYTI…KQKA), 794–828 (GFEL…RSRG), 841–866 (QMSH…DTRS), 867–893 (QCHI…VGYR), 898–932 (CFTA…WMKG), 943–960 (VEQA…KYRQ), 966–1000 (KFTS…NVKH), 1001–1035 (HYTQ…RLRD), 1037–1071 (GYKL…RMKG), 1075–1109 (GSRS…HAKA), 1110–1136 (HFHL…QDYR), 1141–1175 (QHTV…FMRG), 1180–1203 (VPGT…KYRQ), 1209–1243 (KYTA…DARH), 1244–1278 (QYTM…NLRA), 1280–1314 (GYKL…KERG), 1318–1352 (GVRN…SSQA), 1353–1379 (QCHL…HDYR), 1384–1418 (EFTA…GMKG), 1425–1446 (QSPQ…KYRK), 1452–1478 (KFTT…RLYR), 1487–1521 (RYTP…QSRA), 1523–1557 (GYDF…RDRG), 1561–1595 (GYRS…KGRS), 1596–1630 (QFHS…QHTS), and 1637–1661 (LKHA…LTRG). A Phosphothreonine modification is found at threonine 203. Serine 1078 is subject to Phosphoserine.

Interacts with actin, alpha-actinin, KLHL41, TLN1 and VCL. Interacts with CSRP3. In terms of tissue distribution, expressed in cardiac and skeletal muscle. Not detected in kidney, spleen, liver, brain, lung, stomach or uterus.

May be involved in anchoring the terminal actin filaments in the myofibril to the membrane and in transmitting tension from the myofibrils to the extracellular matrix. The sequence is that of Nebulin-related-anchoring protein from Mus musculus (Mouse).